The following is a 68-amino-acid chain: Large ribosomal subunit protein uL29 (68 aa).

Belongs to the universal ribosomal protein uL29 family.

The polypeptide is Large ribosomal subunit protein uL29 (Bradyrhizobium diazoefficiens (strain JCM 10833 / BCRC 13528 / IAM 13628 / NBRC 14792 / USDA 110)).